A 185-amino-acid chain; its full sequence is MALDKLLENEAQSEIERIRAEARGRAEKIVADARERAQTLLDSRQRLLENQRQAGLVRARSAADLELNAARLTASESGVTQVYQMVEDYLGNVTSAPEYGNILSRLIQEGLQAVPDAEAIEVNPAEMNVARHLVSGVEVRENPSIKGGVRVVARGGKSGVTNTLSGRLERVKADMAPQISRLLAE.

This sequence belongs to the V-ATPase E subunit family.

Its function is as follows. Produces ATP from ADP in the presence of a proton gradient across the membrane. The polypeptide is V-type ATP synthase subunit E (Deinococcus radiodurans (strain ATCC 13939 / DSM 20539 / JCM 16871 / CCUG 27074 / LMG 4051 / NBRC 15346 / NCIMB 9279 / VKM B-1422 / R1)).